The following is a 551-amino-acid chain: Putative BTB/POZ domain-containing protein L76 (551 aa).

In terms of domain architecture, BTB spans 19–90 (TDIILEIEDD…FYGQENDVID (72 aa)).

The protein belongs to the mimivirus BTB/WD family.

The protein is Putative BTB/POZ domain-containing protein L76 of Acanthamoeba polyphaga (Amoeba).